The sequence spans 589 residues: Mini-chromosome maintenance complex-binding protein (589 aa).

Positions 163 to 211 (VDEEMTDSMDSSTLEAGRNGSPFKKMKVGEATSSASESQVPQTSGIPPA) are disordered. The span at 193–207 (ATSSASESQVPQTSG) shows a compositional bias: polar residues.

The protein belongs to the MCMBP family. As to quaternary structure, interacts with the MCM complex.

The protein localises to the nucleus. Its function is as follows. Associated component of the MCM complex that acts as a regulator of DNA replication. Binds to the MCM complex during late S phase and may act by promoting the disassembly of the MCM complex from chromatin. Required for sister chromatid cohesion. In Arabidopsis thaliana (Mouse-ear cress), this protein is Mini-chromosome maintenance complex-binding protein (ETG1).